The sequence spans 456 residues: Exodeoxyribonuclease 7 large subunit (456 aa).

The binds ssDNA, also required to bind the small subunit stretch occupies residues 1–103 (MLPSQSPAIF…DYQIIVESMQ (103 aa)).

It belongs to the XseA family. As to quaternary structure, heterooligomer composed of two different subunits with an approximate ratio of 4:1 for small to large subunit. Also estimated to have a 6:1 ration for small to large subunits. Does not require a metal cofactor. serves as cofactor.

Its subcellular location is the cytoplasm. It catalyses the reaction Exonucleolytic cleavage in either 5'- to 3'- or 3'- to 5'-direction to yield nucleoside 5'-phosphates.. In terms of biological role, bidirectionally degrades single-stranded DNA into large acid-insoluble oligonucleotides, which are then degraded further into small acid-soluble oligonucleotides. It can degrade 3' or 5' ss regions extending from the termini of duplex DNA molecules and displaced ss regions. It can also excise thymine dimers in vitro. ssDNA-binding requires both subunits. Required for production of the mature 5'-end of retron Ec78 or Ec83 msDNA. Overproduction of this subunit in the absence of an equivalent quantity of the small subunit is toxic, causing cell elongation and chromosome fragmentation or loss; its toxicity is mostly suppressed by RecA. The protein is Exodeoxyribonuclease 7 large subunit of Escherichia coli (strain K12).